The following is a 353-amino-acid chain: Putrescine N-methyltransferase 2 (353 aa).

The segment at 15–50 is disordered; the sequence is KSGAIPMNGHHNGTSKHQNGHKNGTSEQQNGTISLD. A compositionally biased stretch (polar residues) spans 25 to 50; it reads HNGTSKHQNGHKNGTSEQQNGTISLD. Residues 64-301 form the PABS domain; the sequence is PGWFSEFSAL…GVIGYMLCST (238 aa). Residues glutamine 95, glutamate 170, and 201–202 each bind S-adenosyl-L-methionine; that span reads DG. Aspartate 220 acts as the Proton acceptor in catalysis. Tyrosine 289 contacts S-adenosyl-L-methionine.

Belongs to the class I-like SAM-binding methyltransferase superfamily. Putrescine methyltransferase family. In terms of tissue distribution, predominantly expressed in roots.

It carries out the reaction putrescine + S-adenosyl-L-methionine = N-methylputrescine + S-adenosyl-L-homocysteine + H(+). It functions in the pathway alkaloid biosynthesis; nicotine biosynthesis. Involved in the biosynthesis of pyridine alkaloid natural products, leading mainly to the production of anabasine, anatabine, nicotine and nornicotine, effective deterrents against herbivores with antiparasitic and pesticide properties (neurotoxins); nornicotine serves as the precursor in the synthesis of the carcinogen compound N'-nitrosonornicotine (NNN). Methyltransferase that mediates the conversion of putrescine to N-methylputrescine. Promotes leaves ripening. The sequence is that of Putrescine N-methyltransferase 2 from Nicotiana tabacum (Common tobacco).